Reading from the N-terminus, the 88-residue chain is Putative septation protein SpoVG (88 aa).

It belongs to the SpoVG family.

Could be involved in septation. In Desulforudis audaxviator (strain MP104C), this protein is Putative septation protein SpoVG.